The primary structure comprises 315 residues: L-threo-3-deoxy-hexylosonate aldolase (315 aa).

50–51 lines the substrate pocket; the sequence is SN. Residue Lys174 is the Schiff-base intermediate with substrate of the active site.

This sequence belongs to the DapA family.

The catalysed reaction is 2-dehydro-3-deoxy-L-galactonate = L-glyceraldehyde + pyruvate. The protein operates within carbohydrate acid metabolism. Functionally, mediates the conversion of 2-dehydro-3-deoxy-L-galactonate to pyruvate and L-glyceraldehyde in D-galacturonate catabolic process. The protein is L-threo-3-deoxy-hexylosonate aldolase (lga1) of Hypocrea jecorina (Trichoderma reesei).